Consider the following 168-residue polypeptide: MSRSRTNGNFIDKTFSIVANILLQIIPTTSGEKEAFTYYRDGMSAQSEGNYAEALQNYYEAMRLEMDPYDRSYILYNIGLIHTSNGEHTKALEYYFRALERNPFLPQAFNNMAVICHYRGEQAVREGDSEIAEAWFDQAAEYWKQAIALTPGNYIEAHNWLKITRRFE.

TPR repeat units follow at residues 35 to 68 (AFTYYRDGMSAQSEGNYAEALQNYYEAMRLEMDP), 72 to 105 (SYILYNIGLIHTSNGEHTKALEYYFRALERNPFL), and 120 to 153 (GEQAVREGDSEIAEAWFDQAAEYWKQAIALTPGN).

This sequence belongs to the Ycf3 family.

The protein localises to the plastid. It localises to the chloroplast thylakoid membrane. Essential for the assembly of the photosystem I (PSI) complex. May act as a chaperone-like factor to guide the assembly of the PSI subunits. The chain is Photosystem I assembly protein Ycf3 from Plantago lanceolata (English plantain).